The sequence spans 465 residues: Glutamate--tRNA ligase (465 aa).

Residues 8 to 18 (PSPTGDLHIGG) carry the 'HIGH' region motif. Residues 235–239 (RLSKR) carry the 'KMSKS' region motif. Lysine 238 provides a ligand contact to ATP.

Belongs to the class-I aminoacyl-tRNA synthetase family. Glutamate--tRNA ligase type 1 subfamily. As to quaternary structure, monomer.

The protein resides in the cytoplasm. The catalysed reaction is tRNA(Glu) + L-glutamate + ATP = L-glutamyl-tRNA(Glu) + AMP + diphosphate. Functionally, catalyzes the attachment of glutamate to tRNA(Glu) in a two-step reaction: glutamate is first activated by ATP to form Glu-AMP and then transferred to the acceptor end of tRNA(Glu). The chain is Glutamate--tRNA ligase from Dichelobacter nodosus (strain VCS1703A).